Reading from the N-terminus, the 240-residue chain is RxLR effector protein PexRD20 (240 aa).

The N-terminal stretch at 1–23 (MRCHYFVLLAVAAFLAGANVAVA) is a signal peptide. A RxLR-dEER motif is present at residues 43-58 (RALRSHTKATDHGEER).

Belongs to the RxLR effector family.

It localises to the secreted. It is found in the host cytoplasm. The protein resides in the host nucleus. The protein localises to the host nucleolus. Its function is as follows. Effector that enhances P.infestans colonization of Nicotiana benthamiana leaves. This is RxLR effector protein PexRD20 from Phytophthora infestans (strain T30-4) (Potato late blight agent).